Consider the following 490-residue polypeptide: Betaine aldehyde dehydrogenase (490 aa).

Asn-93 serves as a coordination point for K(+). 150–152 contributes to the NAD(+) binding site; sequence GAW. Lys-162 serves as the catalytic Charge relay system. NAD(+) is bound at residue 176–179; sequence KPSE. Val-180 lines the K(+) pocket. Residue 230 to 233 participates in NAD(+) binding; it reads GTAT. Position 246 (Leu-246) interacts with K(+). Glu-252 serves as the catalytic Proton acceptor. Residues Gly-254, Cys-286, and Glu-387 each contribute to the NAD(+) site. Cys-286 (nucleophile) is an active-site residue. Residue Cys-286 is modified to Cysteine sulfenic acid (-SOH). K(+) contacts are provided by Lys-457 and Gly-460. Residue Glu-464 is the Charge relay system of the active site.

It belongs to the aldehyde dehydrogenase family. Dimer of dimers. The cofactor is K(+).

The catalysed reaction is betaine aldehyde + NAD(+) + H2O = glycine betaine + NADH + 2 H(+). The protein operates within amine and polyamine biosynthesis; betaine biosynthesis via choline pathway; betaine from betaine aldehyde: step 1/1. Its function is as follows. Involved in the biosynthesis of the osmoprotectant glycine betaine. Catalyzes the irreversible oxidation of betaine aldehyde to the corresponding acid. The polypeptide is Betaine aldehyde dehydrogenase (Xanthomonas euvesicatoria pv. vesicatoria (strain 85-10) (Xanthomonas campestris pv. vesicatoria)).